A 119-amino-acid chain; its full sequence is Large ribosomal subunit protein bL20 (119 aa).

Belongs to the bacterial ribosomal protein bL20 family.

Binds directly to 23S ribosomal RNA and is necessary for the in vitro assembly process of the 50S ribosomal subunit. It is not involved in the protein synthesizing functions of that subunit. The chain is Large ribosomal subunit protein bL20 from Nitrosospira multiformis (strain ATCC 25196 / NCIMB 11849 / C 71).